We begin with the raw amino-acid sequence, 130 residues long: MVRMNVLADALKSINNAEKRGKRQVLIRPCSKVIVRFLTVMMKHGYIGEFEIIDDHRAGKIVVNLTGRLNKCGVISPRFDVQLKDLEKWQNNLLPSRQFGFIVLTTSAGIMDHEEARRKHTGGKILGFFF.

At K88 the chain carries N6-succinyllysine.

The protein belongs to the universal ribosomal protein uS8 family. Component of the small ribosomal subunit. Part of the small subunit (SSU) processome, composed of more than 70 proteins and the RNA chaperone small nucleolar RNA (snoRNA) U3.

It localises to the cytoplasm. The protein localises to the nucleus. Its subcellular location is the nucleolus. Functionally, component of the small ribosomal subunit. The ribosome is a large ribonucleoprotein complex responsible for the synthesis of proteins in the cell. Part of the small subunit (SSU) processome, first precursor of the small eukaryotic ribosomal subunit. During the assembly of the SSU processome in the nucleolus, many ribosome biogenesis factors, an RNA chaperone and ribosomal proteins associate with the nascent pre-rRNA and work in concert to generate RNA folding, modifications, rearrangements and cleavage as well as targeted degradation of pre-ribosomal RNA by the RNA exosome. Required for proper erythropoiesis. The polypeptide is Small ribosomal subunit protein uS8 (Rps15a) (Mus musculus (Mouse)).